Reading from the N-terminus, the 351-residue chain is MQNLAPASEGQRLRRILDANLDRAREGLRVIEEWCRFGREDAALSAECKDLRQTLGRYHTEELRAARQTDQDPGTALSHPQERDRPTLNAVLTANFARVQEALRVIEEYGKLTDTELSETAKALRYRVYILEQALTLNPLQARLRQLQGAKLYLVTAPSDRLLEIVEAALKGGLPLVQYRDKTSDDHTRLTTARQLQALCQRYGALFLVNDRVDIALGANADGVHLGQMDIPMELARQILGRDRLVGRSTTNAQELERAIAEGADYVGVGPIFATPTKPGKAAVGFDYLQYARKHAPMPQFAIGGIDLSNIEEVIKAGATQVAVVRAIMAAADPEATTRELLRRLSQGEPS.

A unknown region spans residues 1-127 (MQNLAPASEG…SETAKALRYR (127 aa)). The tract at residues 64–84 (RAARQTDQDPGTALSHPQERD) is disordered. The tract at residues 128–351 (VYILEQALTL…LRRLSQGEPS (224 aa)) is thiamine-phosphate synthase. 4-amino-2-methyl-5-(diphosphooxymethyl)pyrimidine contacts are provided by residues 178–182 (QYRDK) and asparagine 210. 2 residues coordinate Mg(2+): aspartate 211 and aspartate 230. 4-amino-2-methyl-5-(diphosphooxymethyl)pyrimidine is bound at residue serine 249. 275–277 (TPT) lines the 2-[(2R,5Z)-2-carboxy-4-methylthiazol-5(2H)-ylidene]ethyl phosphate pocket. Lysine 278 lines the 4-amino-2-methyl-5-(diphosphooxymethyl)pyrimidine pocket. Residue glycine 305 coordinates 2-[(2R,5Z)-2-carboxy-4-methylthiazol-5(2H)-ylidene]ethyl phosphate.

This sequence belongs to the thiamine-phosphate synthase family. The cofactor is Mg(2+).

It carries out the reaction 2-[(2R,5Z)-2-carboxy-4-methylthiazol-5(2H)-ylidene]ethyl phosphate + 4-amino-2-methyl-5-(diphosphooxymethyl)pyrimidine + 2 H(+) = thiamine phosphate + CO2 + diphosphate. It catalyses the reaction 2-(2-carboxy-4-methylthiazol-5-yl)ethyl phosphate + 4-amino-2-methyl-5-(diphosphooxymethyl)pyrimidine + 2 H(+) = thiamine phosphate + CO2 + diphosphate. The catalysed reaction is 4-methyl-5-(2-phosphooxyethyl)-thiazole + 4-amino-2-methyl-5-(diphosphooxymethyl)pyrimidine + H(+) = thiamine phosphate + diphosphate. It functions in the pathway cofactor biosynthesis; thiamine diphosphate biosynthesis; thiamine phosphate from 4-amino-2-methyl-5-diphosphomethylpyrimidine and 4-methyl-5-(2-phosphoethyl)-thiazole: step 1/1. Functionally, condenses 4-methyl-5-(beta-hydroxyethyl)thiazole monophosphate (THZ-P) and 2-methyl-4-amino-5-hydroxymethyl pyrimidine pyrophosphate (HMP-PP) to form thiamine monophosphate (TMP). The polypeptide is Thiamine-phosphate synthase (Thermosynechococcus vestitus (strain NIES-2133 / IAM M-273 / BP-1)).